The sequence spans 338 residues: Glyceraldehyde-3-phosphate dehydrogenase (338 aa).

NAD(+) is bound by residues 12–13 (RI), Asp34, and Arg79. D-glyceraldehyde 3-phosphate contacts are provided by residues 150–152 (SCT), Thr181, 210–211 (TG), and Arg233. Residue Cys151 is the Nucleophile of the active site. Asn315 lines the NAD(+) pocket.

It belongs to the glyceraldehyde-3-phosphate dehydrogenase family. In terms of assembly, homotetramer.

The protein resides in the cytoplasm. It catalyses the reaction D-glyceraldehyde 3-phosphate + phosphate + NAD(+) = (2R)-3-phospho-glyceroyl phosphate + NADH + H(+). The protein operates within carbohydrate degradation; glycolysis; pyruvate from D-glyceraldehyde 3-phosphate: step 1/5. The protein is Glyceraldehyde-3-phosphate dehydrogenase (GPD) of Sordaria macrospora.